The chain runs to 294 residues: Acetylglutamate kinase (294 aa).

Residues 69–70 (GG), R91, and N190 contribute to the substrate site.

Belongs to the acetylglutamate kinase family. ArgB subfamily.

The protein resides in the cytoplasm. The catalysed reaction is N-acetyl-L-glutamate + ATP = N-acetyl-L-glutamyl 5-phosphate + ADP. It functions in the pathway amino-acid biosynthesis; L-arginine biosynthesis; N(2)-acetyl-L-ornithine from L-glutamate: step 2/4. Catalyzes the ATP-dependent phosphorylation of N-acetyl-L-glutamate. This chain is Acetylglutamate kinase, found in Mycobacterium tuberculosis (strain CDC 1551 / Oshkosh).